We begin with the raw amino-acid sequence, 252 residues long: Hydroxyacylglutathione hydrolase (252 aa).

Positions 54, 56, 58, 59, 111, 128, and 166 each coordinate Zn(2+).

The protein belongs to the metallo-beta-lactamase superfamily. Glyoxalase II family. As to quaternary structure, monomer. The cofactor is Zn(2+).

The enzyme catalyses an S-(2-hydroxyacyl)glutathione + H2O = a 2-hydroxy carboxylate + glutathione + H(+). Its pathway is secondary metabolite metabolism; methylglyoxal degradation; (R)-lactate from methylglyoxal: step 2/2. In terms of biological role, thiolesterase that catalyzes the hydrolysis of S-D-lactoyl-glutathione to form glutathione and D-lactic acid. In Vibrio vulnificus (strain CMCP6), this protein is Hydroxyacylglutathione hydrolase.